We begin with the raw amino-acid sequence, 998 residues long: Sensor histidine kinase AruS (998 aa).

Disordered regions lie at residues 27–82 (ERRP…HARA), 154–198 (RQAG…LPAG), and 224–245 (RQHPALAGRQRARLSAPRRQPR). Residues 40–49 (GEAAVRRAGL) are compositionally biased toward low complexity. Residues 161 to 183 (HRLHRPRTTHRHAVRRAPGRRRE) are compositionally biased toward basic residues. Transmembrane regions (helical) follow at residues 264–284 (VLLFSLCFTVLAGAVQLFFEY) and 395–415 (ASLLWMGSFLCGLAVALSWLF). Residues 417–473 (SLVTRHLWRMSEFAGHIAEGDLQQPLRLDKVDRERDEIDAVAAALEDMRQALRTDRR) enclose the HAMP domain. Residues 513 to 734 (TMSHEIRTPL…TFWFEIELAL (222 aa)) form the Histidine kinase domain. H516 bears the Phosphohistidine; by autocatalysis mark. A Response regulatory domain is found at 751-869 (EVLLVEDVAL…ELRRALGEVG (119 aa)). At D800 the chain carries 4-aspartylphosphate. The 94-residue stretch at 894–987 (GRHKLAGLLG…RDGAEALRRA (94 aa)) folds into the HPt domain. H933 bears the Phosphohistidine mark.

Autophosphorylated. Activation may require a sequential transfer of a phosphate group from a His in the primary transmitter domain, to an Asp in the receiver domain and to a His in the secondary transmitter domain.

The protein resides in the cell membrane. It catalyses the reaction ATP + protein L-histidine = ADP + protein N-phospho-L-histidine.. It functions in the pathway amino-acid degradation; L-arginine degradation [regulation]. In terms of biological role, member of the two-component regulatory system AruS/AruR, which is involved in the regulation of the arginine transaminase (ATA) pathway in response to exogeneous L-arginine. Probably functions as a sensor kinase that phosphorylates AruR. The sequence is that of Sensor histidine kinase AruS (aruS) from Pseudomonas aeruginosa (strain ATCC 15692 / DSM 22644 / CIP 104116 / JCM 14847 / LMG 12228 / 1C / PRS 101 / PAO1).